A 289-amino-acid chain; its full sequence is Glucosamine-6-phosphate deaminase 1 (289 aa).

Lys-64 bears the N6-acetyllysine mark. Asp-72 (proton acceptor; for enolization step) is an active-site residue. Asp-141 acts as the For ring-opening step in catalysis. His-143 serves as the catalytic Proton acceptor; for ring-opening step. Glu-148 functions as the For ring-opening step in the catalytic mechanism. Phosphothreonine is present on Thr-161.

It belongs to the glucosamine/galactosamine-6-phosphate isomerase family. As to quaternary structure, homohexamer.

It localises to the cytoplasm. The catalysed reaction is alpha-D-glucosamine 6-phosphate + H2O = beta-D-fructose 6-phosphate + NH4(+). It functions in the pathway nucleotide-sugar biosynthesis; UDP-N-acetyl-alpha-D-glucosamine biosynthesis; alpha-D-glucosamine 6-phosphate from D-fructose 6-phosphate: step 1/1. Its activity is regulated as follows. Allosterically activated by N-acetylglucosamine-6-phosphate (GlcNAc6P). In terms of biological role, catalyzes the reversible conversion of alpha-D-glucosamine 6-phosphate (GlcN-6P) into beta-D-fructose 6-phosphate (Fru-6P) and ammonium ion, a regulatory reaction step in de novo uridine diphosphate-N-acetyl-alpha-D-glucosamine (UDP-GlcNAc) biosynthesis via hexosamine pathway. Deamination is coupled to aldo-keto isomerization mediating the metabolic flux from UDP-GlcNAc toward Fru-6P. At high ammonium level can drive amination and isomerization of Fru-6P toward hexosamines and UDP-GlcNAc synthesis. Has a role in fine tuning the metabolic fluctuations of cytosolic UDP-GlcNAc and their effects on hyaluronan synthesis that occur during tissue remodeling. Seems to trigger calcium oscillations in mammalian eggs. These oscillations serve as the essential trigger for egg activation and early development of the embryo. The polypeptide is Glucosamine-6-phosphate deaminase 1 (Homo sapiens (Human)).